The following is a 140-amino-acid chain: Nucleoside diphosphate kinase (140 aa).

ATP is bound by residues K11, F59, R87, T93, R104, and N114. H117 (pros-phosphohistidine intermediate) is an active-site residue.

This sequence belongs to the NDK family. As to quaternary structure, homotetramer. The cofactor is Mg(2+).

The protein resides in the cytoplasm. It carries out the reaction a 2'-deoxyribonucleoside 5'-diphosphate + ATP = a 2'-deoxyribonucleoside 5'-triphosphate + ADP. The enzyme catalyses a ribonucleoside 5'-diphosphate + ATP = a ribonucleoside 5'-triphosphate + ADP. Its function is as follows. Major role in the synthesis of nucleoside triphosphates other than ATP. The ATP gamma phosphate is transferred to the NDP beta phosphate via a ping-pong mechanism, using a phosphorylated active-site intermediate. In Methylorubrum populi (strain ATCC BAA-705 / NCIMB 13946 / BJ001) (Methylobacterium populi), this protein is Nucleoside diphosphate kinase.